Consider the following 295-residue polypeptide: Acetylglutamate kinase (295 aa).

Residues 70–71 (GG), R92, and N191 contribute to the substrate site.

The protein belongs to the acetylglutamate kinase family. ArgB subfamily.

The protein localises to the cytoplasm. The catalysed reaction is N-acetyl-L-glutamate + ATP = N-acetyl-L-glutamyl 5-phosphate + ADP. It participates in amino-acid biosynthesis; L-arginine biosynthesis; N(2)-acetyl-L-ornithine from L-glutamate: step 2/4. Functionally, catalyzes the ATP-dependent phosphorylation of N-acetyl-L-glutamate. This chain is Acetylglutamate kinase, found in Mycolicibacterium paratuberculosis (strain ATCC BAA-968 / K-10) (Mycobacterium paratuberculosis).